Here is a 353-residue protein sequence, read N- to C-terminus: MRLPRRAALGLLPLLLLLPPAPEAAKKPTPCHRCRGLVDKFNQGMVDTAKKNFGGGNTAWEEKTLSKYESSEIRLLEILEGLCESSDFECNQMLEAQEEHLEAWWLQLKSEYPDLFEWFCVKTLKVCCSPGTYGPDCLACQGGSQRPCSGNGHCSGDGSRQGDGSCRCHMGYQGPLCTDCMDGYFSSLRNETHSICTACDESCKTCSGLTNRDCGECEVGWVLDEGACVDVDECAAEPPPCSAAQFCKNANGSYTCEECDSSCVGCTGEGPGNCKECISGYAREHGQCADVDECSLAEKTCVRKNENCYNTPGSYVCVCPDGFEETEDACVPPAEAEATEGESPTQLPSREDL.

An N-terminal signal peptide occupies residues 1–24 (MRLPRRAALGLLPLLLLLPPAPEA). The CXXC signature appears at 31 to 34 (CHRC). 4 disulfides stabilise this stretch: cysteine 31/cysteine 34, cysteine 140/cysteine 154, cysteine 148/cysteine 166, and cysteine 168/cysteine 177. The EGF-like 1 domain maps to 136-178 (DCLACQGGSQRPCSGNGHCSGDGSRQGDGSCRCHMGYQGPLCT). The FU 1 repeat unit spans residues 193 to 240 (HSICTACDESCKTCSGLTNRDCGECEVGWVLDEGACVDVDECAAEPPP). N-linked (GlcNAc...) asparagine glycosylation is present at asparagine 251. The FU 2 repeat unit spans residues 253 to 302 (SYTCEECDSSCVGCTGEGPGNCKECISGYAREHGQCADVDECSLAEKTCV). The short motif at 263–266 (CVGC) is the CXXC element. Disulfide bonds link cysteine 263–cysteine 266, cysteine 294–cysteine 308, cysteine 301–cysteine 317, and cysteine 319–cysteine 330. The 42-residue stretch at 290–331 (DVDECSLAEKTCVRKNENCYNTPGSYVCVCPDGFEETEDACV) folds into the EGF-like 2; calcium-binding domain. The interval 332–353 (PPAEAEATEGESPTQLPSREDL) is disordered. Over residues 342–353 (ESPTQLPSREDL) the composition is skewed to polar residues.

The protein belongs to the CRELD family. In terms of assembly, interacts with CHRNA4. Component of a complex containing at least CRELD2, MANF, MATN3 and PDIA4. Ubiquitously expressed. Highly expressed in skeletal muscle, heart, liver, kidney and placenta.

The protein localises to the endoplasmic reticulum. The enzyme catalyses Catalyzes the rearrangement of -S-S- bonds in proteins.. Its function is as follows. Protein disulfide isomerase. Might play a role in the unfolded protein response. May regulate transport of alpha4-beta2 neuronal acetylcholine receptor. This is Protein disulfide isomerase CRELD2 (CRELD2) from Homo sapiens (Human).